The following is a 913-amino-acid chain: Zinc finger protein 112 (913 aa).

Residues 8–79 (VTFKDVAVVF…ETETPRDGCS (72 aa)) form the KRAB domain. Residue K256 forms a Glycyl lysine isopeptide (Lys-Gly) (interchain with G-Cter in SUMO2) linkage. A C2H2-type 1; degenerate zinc finger spans residues 258-280 (YPCTGYRKAFSNDSSSEVHQQFH). A C2H2-type 2; degenerate zinc finger spans residues 443-465 (YNSEECGNGFSLASHFQDLQIVH). The segment at 471–493 (YKRYVCSNSFSHNLYLQGHPKIH) adopts a C2H2-type 3; degenerate zinc-finger fold. Residues 497-519 (KPRKEHGNGFNWSSKLKDHQRVH) form a C2H2-type 4; degenerate zinc finger. 13 consecutive C2H2-type zinc fingers follow at residues 525-547 (YKCN…QRVH), 553-575 (YKCE…QRVH), 581-603 (YKCE…QRVH), 609-631 (YKCE…QRVH), 637-659 (FKCE…QRVH), 665-687 (YKCE…QRVH), 693-715 (YQCD…QSVH), 721-743 (YICE…QRVH), 749-771 (YKCE…RRVH), 777-799 (YKCE…QRVH), 805-827 (YKCE…HRVH), 833-855 (YKCE…QRVH), and 861-883 (YKCD…QRVH). K890 is covalently cross-linked (Glycyl lysine isopeptide (Lys-Gly) (interchain with G-Cter in SUMO2)).

Belongs to the krueppel C2H2-type zinc-finger protein family.

It localises to the nucleus. Its function is as follows. May be involved in transcriptional regulation. The sequence is that of Zinc finger protein 112 (ZNF112) from Homo sapiens (Human).